The following is a 347-amino-acid chain: Transcription factor JunD (347 aa).

The tract at residues 1 to 46 is disordered; the sequence is METPFYGDEALSGLGGGGSSSGGGGSFASPGRLFPGAPPTAAPGSM. Gly residues predominate over residues 13 to 26; that stretch reads GLGGGGSSSGGGGS. Residues 29-41 carry the Menin-binding motif (MBM) motif; that stretch reads SPGRLFPGAPPTA. The MAP kinase docking motif; essential for its phosphorylation signature appears at 48–57; the sequence is KKDALTLSLS. Residues 63 to 91 form a disordered region; the sequence is ALKPAAAPPPGPLRTDGAPGTAPPDGLLA. Ser92 carries the post-translational modification Phosphoserine. At Ser102 the chain carries Phosphoserine; by MAPK8. Phosphothreonine is present on Thr119. Disordered stretches follow at residues 164–183 and 218–264; these read AAAG…SELA and EPVP…IDMD. Over residues 220–231 the composition is skewed to pro residues; it reads VPFPPPPPPGTL. A phosphoserine mark is found at Ser251, Ser255, and Ser259. The interval 268-295 is basic motif; that stretch reads RIKAERKRLRNRIAASKCRKRKLERISR. The bZIP domain maps to 268 to 331; that stretch reads RIKAERKRLR…AQLKQKVLSH (64 aa). Residues 296 to 324 form a leucine-zipper region; the sequence is LEEKVKTLKSQNTELASTASLLREQVAQL.

Belongs to the bZIP family. Jun subfamily. As to quaternary structure, heterodimer; binds DNA as a heterodimer. Component of an AP-1 transcription factor complex composed of JUN-FOS heterodimers. As part of the AP-1 transcription factor complex, forms heterodimers with FOS proteins, thereby binding to the AP-1 consensus sequence and stimulating transcription. Forms heterodimers with FOSB; thereby binding to the AP-1 consensus sequence. Interacts (via MBM motif) with MEN1; this interaction represses transcriptional activation. Interacts with MAPK10; this interaction is inhibited in the presence of MEN1. Phosphorylated by MAP kinases MAPK8 and MAPK10; phosphorylation is inhibited in the presence of MEN1.

It is found in the nucleus. Functionally, transcription factor binding AP-1 sites. Heterodimerizes with proteins of the FOS family to form an AP-1 transcription factor complex, thereby enhancing their DNA binding activity to an AP-1 consensus sequence 3'-TGA[GC]TCA-5' and enhancing their transcriptional activity. This is Transcription factor JunD (JUND) from Bos taurus (Bovine).